The sequence spans 157 residues: Type II restriction enzyme PvuII (157 aa).

Mg(2+) contacts are provided by Asp58 and Glu68.

In terms of assembly, homodimer. Mg(2+) is required as a cofactor.

The enzyme catalyses Endonucleolytic cleavage of DNA to give specific double-stranded fragments with terminal 5'-phosphates.. Its function is as follows. A P subtype restriction enzyme that recognizes the double-stranded sequence 5'-CAGCTG-3' and cleaves after G-3. This chain is Type II restriction enzyme PvuII (pvuIIR), found in Proteus hauseri.